The following is a 653-amino-acid chain: Protein SCARECROW (653 aa).

Disordered regions lie at residues Met-1 to Ser-69 and Pro-193 to Thr-265. Low complexity predominate over residues Pro-17–Arg-31. The segment covering Gly-32–Leu-41 has biased composition (pro residues). A compositionally biased stretch (polar residues) spans Glu-51–Arg-63. Over residues Gln-209 to His-230 the composition is skewed to low complexity. Over residues Ser-246 to Thr-265 the composition is skewed to polar residues. The region spanning Gln-281–Thr-650 is the GRAS domain. A leucine repeat I (LRI) region spans residues Leu-288–Ala-351. The short motif at Leu-295–Glu-299 is the LxCxE motif element. The interval Phe-370–Gly-435 is VHIID. Positions Val-401–Asp-405 match the VHIID motif. Residues Ala-445–Arg-477 form a leucine repeat II (LRII) region. Residues Val-486–Asn-573 are PFYRE. The SAW stretch occupies residues Ala-576 to Thr-650.

It belongs to the GRAS family. Interacts with SHR, JKD and MGP. Interacts with SIEL. Interacts with RBR1 through its the LxCxE motif. Expressed in siliques, leaves and roots. Detected in the initial daughter cell before its asymmetric division and remains expressed only in the endodermal cell layer after the division. Expressed in the endodermis or starch sheath of the seedling hypocotyl, in the leaf bundle sheath cells and the root quiescent center.

Its subcellular location is the nucleus. Its function is as follows. Transcription factor required for quiescent center cells specification and maintenance of surrounding stem cells, and for the asymmetric cell division involved in radial pattern formation in roots. Essential for cell division but not differentiation of the ground tissue. Also required for normal shoot gravitropism. Regulates the radial organization of the shoot axial organs. Binds to the promoter of MGP, NUC, RLK and SCL3. Restricts SHR movment and sequesters it into the nucleus of the endodermis. The polypeptide is Protein SCARECROW (Arabidopsis thaliana (Mouse-ear cress)).